A 100-amino-acid polypeptide reads, in one-letter code: UPF0473 protein lwe1514 (100 aa).

The protein belongs to the UPF0473 family.

This chain is UPF0473 protein lwe1514, found in Listeria welshimeri serovar 6b (strain ATCC 35897 / DSM 20650 / CCUG 15529 / CIP 8149 / NCTC 11857 / SLCC 5334 / V8).